Here is a 584-residue protein sequence, read N- to C-terminus: A-type ATP synthase subunit A 2 (584 aa).

227–234 (GGFGTGKT) is an ATP binding site.

It belongs to the ATPase alpha/beta chains family. In terms of assembly, has multiple subunits with at least A(3), B(3), C, D, E, F, H, I and proteolipid K(x).

It localises to the cell membrane. The enzyme catalyses ATP + H2O + 4 H(+)(in) = ADP + phosphate + 5 H(+)(out). Component of the A-type ATP synthase that produces ATP from ADP in the presence of a proton gradient across the membrane. The A chain is the catalytic subunit. The polypeptide is A-type ATP synthase subunit A 2 (Methanospirillum hungatei JF-1 (strain ATCC 27890 / DSM 864 / NBRC 100397 / JF-1)).